The following is a 989-amino-acid chain: ATP-dependent 6-phosphofructokinase subunit alpha (989 aa).

Residues 1 to 585 (MPEPSISALS…SYESFLSVSK (585 aa)) are N-terminal catalytic PFK domain 1. ATP is bound by residues glycine 220, 283–284 (RS), and 313–316 (GDGS). Aspartate 314 provides a ligand contact to Mg(2+). Beta-D-fructose 6-phosphate is bound by residues 359–361 (SID), arginine 396, 403–405 (MGR), glutamate 460, arginine 487, and 493–496 (HVQR). Aspartate 361 acts as the Proton acceptor in catalysis. The tract at residues 586–599 (YDDGSYLVPESSRL) is interdomain linker. The C-terminal regulatory PFK domain 2 stretch occupies residues 600-989 (NIAIIHVGAP…LSGRLSIRTT (390 aa)). Beta-D-fructose 2,6-bisphosphate contacts are provided by residues arginine 670, 727–731 (TVSNN), arginine 765, 772–774 (QGG), glutamate 832, arginine 858, 864–867 (HVQQ), and arginine 963.

Belongs to the phosphofructokinase type A (PFKA) family. ATP-dependent PFK group I subfamily. Eukaryotic two domain clade 'E' sub-subfamily. In terms of assembly, heterododecamer of 4 alpha, 4 beta and 4 gamma chains. The gamma chain bridges the N-terminal halves of the alpha and beta subunits. Requires Mg(2+) as cofactor.

The protein resides in the cytoplasm. It catalyses the reaction beta-D-fructose 6-phosphate + ATP = beta-D-fructose 1,6-bisphosphate + ADP + H(+). It participates in carbohydrate degradation; glycolysis; D-glyceraldehyde 3-phosphate and glycerone phosphate from D-glucose: step 3/4. Its activity is regulated as follows. Allosterically activated by ADP, AMP, or fructose 2,6-bisphosphate, and allosterically inhibited by ATP or citrate. In terms of biological role, catalyzes the phosphorylation of D-fructose 6-phosphate to fructose 1,6-bisphosphate by ATP, the first committing step of glycolysis. Involved in the modulation of glucose-induced microautophagy of peroxisomes independent of its ability to metabolize glucose intermediates. In Komagataella phaffii (strain GS115 / ATCC 20864) (Yeast), this protein is ATP-dependent 6-phosphofructokinase subunit alpha (PFK1).